A 249-amino-acid chain; its full sequence is Tetrahydromethanopterin S-methyltransferase subunit D (249 aa).

6 helical membrane passes run 9–29 (ILWL…VHFV), 47–67 (GTVQ…GFMM), 75–95 (LILA…MIVG), 138–158 (VSFV…ALVY), 183–203 (LVGI…VIPS), and 224–244 (AVIS…IAIS).

The protein belongs to the MtrD family. The complex is composed of 8 subunits; MtrA, MtrB, MtrC, MtrD, MtrE, MtrF, MtrG and MtrH.

It localises to the cell membrane. It carries out the reaction 5-methyl-5,6,7,8-tetrahydromethanopterin + coenzyme M + 2 Na(+)(in) = 5,6,7,8-tetrahydromethanopterin + methyl-coenzyme M + 2 Na(+)(out). It functions in the pathway one-carbon metabolism; methanogenesis from CO(2); methyl-coenzyme M from 5,10-methylene-5,6,7,8-tetrahydromethanopterin: step 2/2. Part of a complex that catalyzes the formation of methyl-coenzyme M and tetrahydromethanopterin from coenzyme M and methyl-tetrahydromethanopterin. This is an energy-conserving, sodium-ion translocating step. The sequence is that of Tetrahydromethanopterin S-methyltransferase subunit D from Methanosarcina acetivorans (strain ATCC 35395 / DSM 2834 / JCM 12185 / C2A).